The chain runs to 230 residues: Small ribosomal subunit protein uS2 (230 aa).

Belongs to the universal ribosomal protein uS2 family.

This is Small ribosomal subunit protein uS2 from Prochlorococcus marinus (strain NATL2A).